We begin with the raw amino-acid sequence, 100 residues long: Integration host factor subunit alpha (100 aa).

Residues 53–72 form a disordered region; sequence FDLRDKRQRPGRNPKTGEEI.

Belongs to the bacterial histone-like protein family. In terms of assembly, heterodimer of an alpha and a beta chain.

This protein is one of the two subunits of integration host factor, a specific DNA-binding protein that functions in genetic recombination as well as in transcriptional and translational control. The polypeptide is Integration host factor subunit alpha (Stutzerimonas stutzeri (strain A1501) (Pseudomonas stutzeri)).